The following is a 35-amino-acid chain: GLNRPSKRCLAGSAPCEFHKRSTCCSGHCIIWWCA.

The propeptide occupies 1-35 (GLNRPSKRCLAGSAPCEFHKRSTCCSGHCIIWWCA). Intrachain disulfides connect Cys-9/Cys-25, Cys-16/Cys-29, and Cys-24/Cys-34.

It belongs to the conotoxin O1 superfamily. Expressed by the venom duct.

The protein localises to the secreted. In terms of biological role, probable neurotoxin with unknown target. Possibly targets ion channels. In Californiconus californicus (California cone), this protein is Conotoxin Cal6.1c.